The chain runs to 247 residues: MLRLYFVALQFLAIIPIPFSFRCREEDLGRSMSFFPLVGLTLGLLLAGCDYLLALALPRPVADLLLVAILALVTGALHLDGLADVCDGLAARGGRERFLAVMKDSRVGAVGVVGLVLALLLKYQALFAVTTDKWETLLFFPMVARFSQVQLTVGSKRARQDGLGSLFIGGAGSMQVAVAAFFTVVTGWLLLGLPGIGCAAVCSLFTCLAKAWFHRKLGGITGDAIGCVSELNEILCLMTLVAIGGRF.

Helical transmembrane passes span 1–21 (MLRL…PFSF), 37–57 (LVGL…ALAL), 61–81 (VADL…HLDG), 109–129 (AVGV…LFAV), and 176–196 (VAVA…LPGI).

This sequence belongs to the CobS family. It depends on Mg(2+) as a cofactor.

The protein resides in the cell inner membrane. It catalyses the reaction alpha-ribazole + adenosylcob(III)inamide-GDP = adenosylcob(III)alamin + GMP + H(+). It carries out the reaction alpha-ribazole 5'-phosphate + adenosylcob(III)inamide-GDP = adenosylcob(III)alamin 5'-phosphate + GMP + H(+). Its pathway is cofactor biosynthesis; adenosylcobalamin biosynthesis; adenosylcobalamin from cob(II)yrinate a,c-diamide: step 7/7. Functionally, joins adenosylcobinamide-GDP and alpha-ribazole to generate adenosylcobalamin (Ado-cobalamin). Also synthesizes adenosylcobalamin 5'-phosphate from adenosylcobinamide-GDP and alpha-ribazole 5'-phosphate. This is Adenosylcobinamide-GDP ribazoletransferase from Geotalea daltonii (strain DSM 22248 / JCM 15807 / FRC-32) (Geobacter daltonii).